We begin with the raw amino-acid sequence, 358 residues long: 4-hydroxy-2-oxovalerate aldolase 2 (358 aa).

The 253-residue stretch at 16–268 (VLLHDMCLRD…ETGVDLFKLM (253 aa)) folds into the Pyruvate carboxyltransferase domain. 24 to 25 (RD) contacts substrate. Aspartate 25 provides a ligand contact to Mn(2+). Histidine 28 serves as the catalytic Proton acceptor. Substrate is bound by residues serine 178 and histidine 207. The Mn(2+) site is built by histidine 207 and histidine 209. Tyrosine 298 contributes to the substrate binding site.

It belongs to the 4-hydroxy-2-oxovalerate aldolase family.

The enzyme catalyses (S)-4-hydroxy-2-oxopentanoate = acetaldehyde + pyruvate. In Methylibium petroleiphilum (strain ATCC BAA-1232 / LMG 22953 / PM1), this protein is 4-hydroxy-2-oxovalerate aldolase 2.